Here is a 37-residue protein sequence, read N- to C-terminus: Large ribosomal subunit protein bL36 (37 aa).

It belongs to the bacterial ribosomal protein bL36 family.

The chain is Large ribosomal subunit protein bL36 from Nitratiruptor sp. (strain SB155-2).